We begin with the raw amino-acid sequence, 315 residues long: Methionyl-tRNA formyltransferase (315 aa).

113 to 116 (SILP) lines the (6S)-5,6,7,8-tetrahydrofolate pocket.

Belongs to the Fmt family.

It catalyses the reaction L-methionyl-tRNA(fMet) + (6R)-10-formyltetrahydrofolate = N-formyl-L-methionyl-tRNA(fMet) + (6S)-5,6,7,8-tetrahydrofolate + H(+). Attaches a formyl group to the free amino group of methionyl-tRNA(fMet). The formyl group appears to play a dual role in the initiator identity of N-formylmethionyl-tRNA by promoting its recognition by IF2 and preventing the misappropriation of this tRNA by the elongation apparatus. The sequence is that of Methionyl-tRNA formyltransferase from Aliivibrio fischeri (strain MJ11) (Vibrio fischeri).